The chain runs to 1226 residues: AF4/FMR2 family member 3 (1226 aa).

A compositionally biased stretch (basic and acidic residues) spans arginine 24–glutamine 37. 5 disordered regions span residues arginine 24–leucine 65, serine 116–glutamine 164, glutamate 197–asparagine 299, lysine 323–tyrosine 496, and isoleucine 523–alanine 728. The segment covering aspartate 42–leucine 52 has biased composition (polar residues). The segment covering serine 123–threonine 132 has biased composition (low complexity). Polar residues-rich tracts occupy residues leucine 251–cysteine 261 and lysine 334–asparagine 344. Positions glutamine 381–leucine 392 are enriched in low complexity. Polar residues predominate over residues alanine 396 to proline 408. The segment covering serine 409–serine 445 has biased composition (low complexity). Over residues glutamine 485–tyrosine 496 the composition is skewed to polar residues. Positions isoleucine 523–proline 533 are enriched in basic and acidic residues. Composition is skewed to low complexity over residues proline 550–alanine 561 and cysteine 569–alanine 579. The segment covering arginine 589–glutamate 607 has biased composition (basic and acidic residues). Over residues threonine 668–aspartate 678 the composition is skewed to low complexity. Positions lysine 692–aspartate 705 are enriched in polar residues. The residue at position 755 (serine 755) is a Phosphoserine. Disordered regions lie at residues proline 783 to asparagine 856, proline 879 to lysine 964, and alanine 1100 to asparagine 1138. Positions arginine 830 to serine 842 are enriched in basic and acidic residues. Residues serine 843 to asparagine 856 show a composition bias toward polar residues. Serine 881 is subject to Phosphoserine. Residues glutamate 894–threonine 909 are compositionally biased toward polar residues.

Belongs to the AF4 family. As to expression, preferentially expressed in lymphoid tissues, highest levels being found in the thymus.

Its subcellular location is the nucleus. Putative transcription activator that may function in lymphoid development and oncogenesis. Binds, in vitro, to double-stranded DNA. The chain is AF4/FMR2 family member 3 from Homo sapiens (Human).